A 257-amino-acid chain; its full sequence is MARKWLNLFAGAALSFAVAGNALADEGKITVFAAASLTNAMQDIATQFKKEKGVDVVSSFASSSTLARQIEAGAPADLFISADQKWMDYAVDKKAIDTATRQTLLGNSLVVVAPKASVQKDFTIDSKTNWTSLLNGGRLAVGDPEHVPAGIYAKEALQKLGAWDTLSPKLAPAEDVRGALALVERNEAPLGIVYGSDAVASKGVKVVATFPEDSHKKVEYPVAVVEGHNNATVKAFYDYLKGPQAAEIFKRYGFTIK.

A signal peptide spans 1–24; sequence MARKWLNLFAGAALSFAVAGNALA. Serine 36, serine 63, alanine 149, valine 176, and tyrosine 194 together coordinate molybdate.

It belongs to the bacterial solute-binding protein ModA family. In terms of assembly, the complex is composed of two ATP-binding proteins (ModC), two transmembrane proteins (ModB) and a solute-binding protein (ModA).

The protein localises to the periplasm. In terms of biological role, part of the ABC transporter complex ModABC involved in the transport of molybdenum into the cell. Binds molybdate with high affinity in vitro and with a similar affinity in vivo. Binds tungstate with high affinity in vitro. Binds unnatural anion perrhenate with high affinity in vitro. Does not bind sulfate, phosphate, arsenate, selenate, chlorate, metavanadate, nitrate, perchlorate, permanganate or carbonate. The polypeptide is Molybdate-binding protein ModA (modA) (Escherichia coli (strain K12)).